A 153-amino-acid chain; its full sequence is MVVLKGVPALLSPELLFALARMGHGDEIVLADVNFPSSSICRGGPEEIRADGLGIPQLLEAVLQLLPLDTYVQSPAMVMELVPSDRKSGLLTPVWTSYQSILSRAGYEFSLGMGRFAFYERAKKAFAVVATGETALYGNLILKKGVLAPKDLC.

The active-site Proton donor is His24. Asp32 is a substrate binding site. The active site involves Asp69. Substrate-binding residues include Met79, Tyr119, Tyr137, and Asn139. Tyr119 is an active-site residue.

This sequence belongs to the RbsD / FucU family. As to quaternary structure, mainly homodimer, but also exists as homotetramer, homooctamer, and homodecamer. The homodimeric form seems catalytically inactive.

The enzyme catalyses alpha-L-fucose = beta-L-fucose. It participates in carbohydrate metabolism; L-fucose metabolism. Involved in the interconversion between alpha- and beta-L-fucoses. L-Fucose (6-deoxy-L-galactose) exists as alpha-L-fucose (29.5%) and beta-L-fucose (70.5%), the beta-form is metabolized through the salvage pathway. GDP-L-fucose formed either by the de novo or salvage pathways is transported into the endoplasmic reticulum, where it serves as a substrate for N- and O-glycosylations by fucosyltransferases. Fucosylated structures expressed on cell surfaces or secreted in biological fluids are believed to play a critical role in cell-cell adhesion and recognition processes. The protein is Fucose mutarotase (FUOM) of Bos taurus (Bovine).